Consider the following 892-residue polypeptide: MKIPSGRCNMAAAMETEQLGVEIFETAECEEGNGESQDRPKLEPFYVERYSWSQLKKLLADTRKYHGYMMAKAPHDFMFVKRTDPDGPHSDRVYYLAMSGENRENTLFYSEIPKTINRAAVLMLSWKPLLDLFQATLDYGMYSREEELLRERKRIGTVGIAAYDYHPGSGTFLFQAGSGIYHIKDGGPHGFTQQPLRPNLVETSCPNIRMDPKLCPADPDWIAFIHSNDIWISNLVTREERRITYVHNELANMEEDPRSAGVATFVLQEEFDRYSGYWWCPQAERTPSGGKILRILYEENDESEVEIIHVTSPMLETRRADSFRYPKTGTANPKVTFKMSEIVVDAAGGIIDVIDKELVQPFEILFEGVEYIARAGWTPEGKHAWSILLDRSQTHLQIVLISPELFIPVEDDAMDRQRLIESVPDSVTPLIIYEETTDIWINIHDIFHVFPQTHEDEIEFIFASECKTGFRHLYKITSILKESKYKRSSGGLPAPSDFKCPIKEEITITSGEWEVLGRHGSNIWVDEARKLVYFEGTKDSPLEHHLYVTSYANPGEVVRLTDRGYSHSCCLSRHCDFFISKYSNQKNPHCVSLYKLSSPEDDPVHKTKEFWATILDSAGPLPDYTPPEIFSFESTTGFTLYGMLYKPHDLQPGKKYPTVLFIYGGPQVQLVNNRFKGVKYFRLNTLASLGYVVVVIDNRGSCHRGLKFEGAFKYKMGQIEIDDQVEGLQYLASQYDFIDLDRVGIHGWSYGGYLSLMALMQRSDIFRVAIAGAPVTLWIFYDTGYTERYMGHPDQNEQGYYLGSVAMQAEKFPSEPNRLLLLHGFLDENVHFAHTSILLSFLVRAGKPYDLQIYPQERHSIRVPESGEHYELHLLHYLQENLGSRIAALKVI.

Catalysis depends on charge relay system residues Ser749, Asp827, and His859.

This sequence belongs to the peptidase S9B family. DPPIV subfamily. In terms of assembly, homodimer. Forms a ternary complex with NLRP1, composed of a DPP8 homodimer, one full-length NLRP1 protein, and one cleaved C-terminus of NLRP1 (NACHT, LRR and PYD domains-containing protein 1, C-terminus). Forms a ternary complex with CARD8, composed of a DPP8 homodimer, one full-length NLRP1 protein, and one cleaved C-terminus of CARD8 (Caspase recruitment domain-containing protein 8, C-terminus). In the ternary complex, only one subunit of the DPP8 homodimer is bound to NLRP1 or CARD8.

It localises to the cytoplasm. The catalysed reaction is Release of an N-terminal dipeptide, Xaa-Yaa-|-Zaa-, from a polypeptide, preferentially when Yaa is Pro, provided Zaa is neither Pro nor hydroxyproline.. With respect to regulation, inhibited by zinc. Inhibited by the serine proteinase inhibitor 4-(2-aminoethyl)benzenesulphonyl fluoride (AEBSF), and by di-isopropylfluorophosphate. Specifically inhibited by isoindoline derivatives. Inhibited by Val-boroPro (Talabostat, PT-100), a non-selective inhibitor, which triggers pyroptosis in monocytes and macrophages. Its function is as follows. Dipeptidyl peptidase that cleaves off N-terminal dipeptides from proteins having a Pro or Ala residue at position 2. Acts as a key inhibitor of caspase-1-dependent monocyte and macrophage pyroptosis in resting cells by preventing activation of NLRP1 and CARD8. Sequesters the cleaved C-terminal part of NLRP1 and CARD8, which respectively constitute the active part of the NLRP1 and CARD8 inflammasomes, in a ternary complex, thereby preventing their oligomerization and activation. The dipeptidyl peptidase activity is required to suppress NLRP1 and CARD8; however, neither NLRP1 nor CARD8 are bona fide substrates of DPP8, suggesting the existence of substrate(s) required for NLRP1 and CARD8 inhibition. In Mus musculus (Mouse), this protein is Dipeptidyl peptidase 8.